The following is a 2248-amino-acid chain: Zinc finger protein 407 (2248 aa).

The span at 1–32 (MMDSENKPENDEDEKINKEAQDLTKLSSHNED) shows a compositional bias: basic and acidic residues. A disordered region spans residues 1–84 (MMDSENKPEN…RRKLDEAEPL (84 aa)). 3 consecutive C2H2-type zinc fingers follow at residues 186 to 208 (LKCSICGHLFSSCSDLEKHAESH), 215 to 238 (HTCCHCSHKAESSSALHMHIKQAH), and 244 to 268 (FSCDLCGFQCSEENLLNAHYLGKTH). Disordered stretches follow at residues 291–322 (KKSRTMATKNVHSKPRTSKSIAKNSDSKGLRN) and 494–515 (SETQEAEQGQGSARPPDSGLHS). Polar residues predominate over residues 494 to 504 (SETQEAEQGQG). 3 C2H2-type zinc fingers span residues 528–551 (CACTDCGQVATNRTDLEIHVKRCH), 557–581 (FYCRTCDFSSMSRRDLDEHLHSNQH), and 615–639 (FLCTPCNLFFLSEKDVEEHKATEKH). The tract at residues 667–700 (ESENAKESMDDSGKASQEEPLKSRVSHGNEVRHS) is disordered. The segment covering 669 to 699 (ENAKESMDDSGKASQEEPLKSRVSHGNEVRH) has biased composition (basic and acidic residues). The C2H2-type 7 zinc-finger motif lies at 705-728 (FQCKKCFYKTRSSTVLTRHIKLRH). Residues 821–847 (LSQSGGSTKDDELASTTTPKRGRPKGN) form a disordered region. C2H2-type zinc fingers lie at residues 850–873 (RTCSHCGLLASSITNLTVHIRRKH) and 879–903 (YLCKVCKYYTVTKGDMERHCATKKH). A disordered region spans residues 910–962 (EASGKHSSDIIVGPEGGSLEAGKKNAGSAVTMSDEHANKPAESPTSVLEKPDR). 2 consecutive C2H2-type zinc fingers follow at residues 1017–1040 (NKCLHCEFSAHSSASLELHVKRKH) and 1046–1070 (FYCMACDYYAVTRREMTRHAATEKH). Residue serine 1262 is modified to Phosphoserine. C2H2-type zinc fingers lie at residues 1444-1468 (FHCLLCGKSFYTESNLHQHLASAGH) and 1486-1509 (FKCVKCTEPFDSEQNLFLHIKGQH). Residues 1537–1561 (NVCKYCGKMCRSSNSMAFLAHIRTH) form a C2H2-type 14; degenerate zinc finger. C2H2-type zinc fingers lie at residues 1567 to 1589 (FKCKICHFATAQLGDARNHVKRH), 1595 to 1618 (YKCHVCGVAFVMKKHLNTHLLGKH), 1628 to 1650 (FTCHLCDRSFTEKWALNNHMKLH), 1656 to 1680 (FKCTWPTCHYSFLTASAMKDHYRTH), 1686 to 1708 (FLCDLCGFAGGTRHALTKHRRQH), 1714 to 1736 (FKCDECNFASTTQSHLTRHKRVH), 1742 to 1767 (YRCPWCDYRSNCAENIRKHILHTGKH), and 1773 to 1796 (YNCPKCDYGTNVPVEFRNHLKEQH).

It is found in the nucleus. In terms of biological role, may be involved in transcriptional regulation. The polypeptide is Zinc finger protein 407 (ZNF407) (Homo sapiens (Human)).